The sequence spans 109 residues: Oncomodulin (109 aa).

An N-acetylserine modification is found at S2. 2 consecutive EF-hand domains span residues 39-74 (MSAS…FQSD) and 78-109 (LTES…MVHS). 10 residues coordinate Ca(2+): D52, D54, S56, Y58, E63, D91, D93, D95, K97, and E102. Residues 82–109 (ETKSLMDAADNDGDGKIGADEFQEMVHS) are disordered. Residues 94-109 (GDGKIGADEFQEMVHS) are compositionally biased toward basic and acidic residues.

It belongs to the parvalbumin family. As to expression, found in tumor tissues and not detected in normal tissues.

In terms of biological role, has some calmodulin-like activity with respect to enzyme activation and growth regulation. Binds two calcium ions. The protein is Oncomodulin (Ocm) of Mus musculus (Mouse).